A 313-amino-acid chain; its full sequence is Probable cell division protein WhiA (313 aa).

Positions 278–311 (SLKELGKLLDPPLSKSGVNHRLRRIKSIANEIRG) form a DNA-binding region, H-T-H motif.

Belongs to the WhiA family.

Functionally, involved in cell division and chromosome segregation. This Halothermothrix orenii (strain H 168 / OCM 544 / DSM 9562) protein is Probable cell division protein WhiA.